Consider the following 215-residue polypeptide: MNVSIEQKYQALLNIVPFVSHETMNDLIQFESLILQWNAHINLISAATIPVLWIRHILDSAQIYPLHSNFLHWCDLGSGGGFPAIVIAIFLKTKKAGHIDLVESNGKKIAFLRTVISQLNLPATVHHCRIEDVYQKIKKPDVITARGLACLDELLQLIFPLLTQKTIALLQKGRDYAIEITNASANWQFDLLKHKSKIDKNSVILEISHVRSCRG.

S-adenosyl-L-methionine is bound by residues Gly77, Phe82, 130 to 131, and Arg146; that span reads IE.

Belongs to the methyltransferase superfamily. RNA methyltransferase RsmG family.

The protein resides in the cytoplasm. It carries out the reaction guanosine(527) in 16S rRNA + S-adenosyl-L-methionine = N(7)-methylguanosine(527) in 16S rRNA + S-adenosyl-L-homocysteine. Its function is as follows. Specifically methylates the N7 position of guanine in position 527 of 16S rRNA. The protein is Ribosomal RNA small subunit methyltransferase G of Bartonella quintana (strain Toulouse) (Rochalimaea quintana).